We begin with the raw amino-acid sequence, 77 residues long: Protein ImpC (77 aa).

Belongs to the DinI family.

The chain is Protein ImpC (impC) from Salmonella typhimurium.